Reading from the N-terminus, the 395-residue chain is S-adenosylmethionine synthase (395 aa).

H14 contacts ATP. D16 serves as a coordination point for Mg(2+). E42 is a K(+) binding site. L-methionine-binding residues include E55 and Q98. The segment at 98 to 108 (QSPDIALGVDK) is flexible loop. ATP contacts are provided by residues 174–176 (DGK), 240–241 (RF), D249, 255–256 (RK), A272, and K276. D249 provides a ligand contact to L-methionine. An L-methionine-binding site is contributed by K280.

Belongs to the AdoMet synthase family. As to quaternary structure, homotetramer; dimer of dimers. Mg(2+) is required as a cofactor. The cofactor is K(+).

Its subcellular location is the cytoplasm. It carries out the reaction L-methionine + ATP + H2O = S-adenosyl-L-methionine + phosphate + diphosphate. The protein operates within amino-acid biosynthesis; S-adenosyl-L-methionine biosynthesis; S-adenosyl-L-methionine from L-methionine: step 1/1. Catalyzes the formation of S-adenosylmethionine (AdoMet) from methionine and ATP. The overall synthetic reaction is composed of two sequential steps, AdoMet formation and the subsequent tripolyphosphate hydrolysis which occurs prior to release of AdoMet from the enzyme. The polypeptide is S-adenosylmethionine synthase (Thermotoga maritima (strain ATCC 43589 / DSM 3109 / JCM 10099 / NBRC 100826 / MSB8)).